The chain runs to 346 residues: GTPase Obg (346 aa).

The 159-residue stretch at 1 to 159 folds into the Obg domain; it reads MRFVDRCRLK…RELRLELKVL (159 aa). Residues 122–147 form a disordered region; sequence KGGRGNLHFKSPHDRAPRRAEPGEPG. Over residues 132–147 the composition is skewed to basic and acidic residues; the sequence is SPHDRAPRRAEPGEPG. An OBG-type G domain is found at 160-336; it reads ADVGLLGFPN…LVRELAALAR (177 aa). GTP is bound by residues 166 to 173, 191 to 195, 218 to 221, 288 to 291, and 317 to 319; these read GFPNAGKS, FTTLT, DIPG, TKAD, and SAA. Residues S173 and T193 each contribute to the Mg(2+) site.

The protein belongs to the TRAFAC class OBG-HflX-like GTPase superfamily. OBG GTPase family. Monomer. Requires Mg(2+) as cofactor.

The protein localises to the cytoplasm. Functionally, an essential GTPase which binds GTP, GDP and possibly (p)ppGpp with moderate affinity, with high nucleotide exchange rates and a fairly low GTP hydrolysis rate. Plays a role in control of the cell cycle, stress response, ribosome biogenesis and in those bacteria that undergo differentiation, in morphogenesis control. This Sorangium cellulosum (strain So ce56) (Polyangium cellulosum (strain So ce56)) protein is GTPase Obg.